A 609-amino-acid polypeptide reads, in one-letter code: Serine/threonine-protein phosphatase 4 regulatory subunit 2 (609 aa).

S68 carries the post-translational modification Phosphoserine. The disordered stretch occupies residues 175-569 (NNNGNADEGS…EEARVSPSAT (395 aa)). Positions 183-194 (GSSPGAGSAGCA) are enriched in low complexity. Positions 201–225 (RSDDNDQPKAKKAKLEIDGEERSEA) are enriched in basic and acidic residues. A phosphoserine mark is found at S223 and S226. Residues 233-244 (VATRVKNEKDEK) are compositionally biased toward basic and acidic residues. S252 is subject to Phosphoserine. Residues 258–270 (EIEEPDEEVDEAD) show a composition bias toward acidic residues. Basic and acidic residues-rich tracts occupy residues 310–351 (IEAE…KPDG) and 375–400 (EPVKVKAENEKEEKKHAPIKTEKQDD). Residues 401-410 (IDSTETDDAP) show a composition bias toward acidic residues. Residues 414-462 (KPAEEKIASSESKPKTKSEDDPEAETKKSQPEKTETEAAEKSVSDEKQA) are compositionally biased toward basic and acidic residues. The residue at position 602 (T602) is a Phosphothreonine. S603 bears the Phosphoserine mark.

It belongs to the PPP4R2 family. As to quaternary structure, serine/threonine-protein phosphatase 4 (PP4) occurs in different assemblies of the catalytic and one or more regulatory subunits. Probably part of a PP4 PPP4C-PPP4R2-PPP4R3 complex containing Pp4-19C, PPP4R2r and flfl.

In terms of biological role, regulatory subunit of serine/threonine-protein phosphatase 4 (PP4). The probable PP4 complex Pp4-19C-PPP4R2r-flfl (PPP4C-PPP4R2-PPP4R3) is required to prevent caspase induced cell death (in vitro). The protein is Serine/threonine-protein phosphatase 4 regulatory subunit 2 (PPP4R2r) of Drosophila melanogaster (Fruit fly).